The sequence spans 237 residues: Sugar fermentation stimulation protein homolog (237 aa).

This sequence belongs to the SfsA family.

The chain is Sugar fermentation stimulation protein homolog from Azorhizobium caulinodans (strain ATCC 43989 / DSM 5975 / JCM 20966 / LMG 6465 / NBRC 14845 / NCIMB 13405 / ORS 571).